Reading from the N-terminus, the 468-residue chain is MSKTLYEKLFDAHVVHEANGETPLIYINRHLVHEVTSPQAFDGLRAMGRSVRQPSKTVATMDHNVPTDSRDLAGSGEMGRVQMVELAKNTEQFGITLYDINHINQGIVHVMGPEQGLTLPGMTIVCGDSHTATHGAFGALAFGIGTSEVEHVLATQTIKQARAKKMKIEVRGKVRDGISAKDIVLAIIGKTTMGGGTGHVVEFCGEAIRDLSMEGRMTVCNMAIELGAKSGIIAPDETTFAYLKDKPYAPKGKDWDEAVAYWQTLHSDEGAEFDTVVTLEASEIEPQVTWGTNPGQVIGINQPIPNPAEMSDPIERQSAEKALAYMDLPHSIKLTDVAIDKVFIGSCTNSRIEDLRAAAAIAKGRKVADGVQALVVPGSGLVREQAEKEGLDKIFIEAGFEWRLPGCSMCLAMNNDRLAPGERCASTSNRNFEGRQGRGGRTHLVSPAMAAAAAVYGKFVDIRNLELH.

A disordered region spans residues 53-74 (QPSKTVATMDHNVPTDSRDLAG). Residues cysteine 347, cysteine 407, and cysteine 410 each contribute to the [4Fe-4S] cluster site.

Belongs to the aconitase/IPM isomerase family. LeuC type 1 subfamily. In terms of assembly, heterodimer of LeuC and LeuD. [4Fe-4S] cluster serves as cofactor.

The catalysed reaction is (2R,3S)-3-isopropylmalate = (2S)-2-isopropylmalate. The protein operates within amino-acid biosynthesis; L-leucine biosynthesis; L-leucine from 3-methyl-2-oxobutanoate: step 2/4. Its function is as follows. Catalyzes the isomerization between 2-isopropylmalate and 3-isopropylmalate, via the formation of 2-isopropylmaleate. This chain is 3-isopropylmalate dehydratase large subunit, found in Pasteurella multocida (strain Pm70).